The sequence spans 499 residues: NAD(P)H-quinone oxidoreductase chain 4, chloroplastic (499 aa).

14 helical membrane passes run 4 to 24, 31 to 51, 87 to 107, 113 to 130, 134 to 154, 167 to 187, 211 to 231, 242 to 262, 274 to 294, 305 to 325, 330 to 350, 386 to 406, 416 to 436, and 462 to 482; these read LPWL…IPLF, MIRW…TYIF, IGLI…AWPV, LLHF…GLFA, ILLF…LLSM, FLLY…SMGL, ILLY…FPLH, HYST…YGLI, SLFS…AALT, IAYS…SMTY, GAIL…FLVG, LALP…GVIT, IIIT…LLSM, and LFIL…PDLV.

It belongs to the complex I subunit 4 family.

The protein localises to the plastid. The protein resides in the chloroplast thylakoid membrane. The enzyme catalyses a plastoquinone + NADH + (n+1) H(+)(in) = a plastoquinol + NAD(+) + n H(+)(out). It carries out the reaction a plastoquinone + NADPH + (n+1) H(+)(in) = a plastoquinol + NADP(+) + n H(+)(out). This Cryptomeria japonica (Japanese cedar) protein is NAD(P)H-quinone oxidoreductase chain 4, chloroplastic.